The primary structure comprises 649 residues: Acetyl-coenzyme A synthetase (649 aa).

CoA is bound by residues R198 to K201, T317, and N341. ATP-binding positions include G393–P395, D417–T422, D506, and R521. S529 is a CoA binding site. R532 contacts ATP. Residues V543, H545, and V548 each contribute to the Mg(2+) site. The residue at position 612 (K612) is an N6-acetyllysine. A disordered region spans residues Q625–L649.

This sequence belongs to the ATP-dependent AMP-binding enzyme family. Requires Mg(2+) as cofactor. In terms of processing, acetylated. Deacetylation by the SIR2-homolog deacetylase activates the enzyme.

The catalysed reaction is acetate + ATP + CoA = acetyl-CoA + AMP + diphosphate. In terms of biological role, catalyzes the conversion of acetate into acetyl-CoA (AcCoA), an essential intermediate at the junction of anabolic and catabolic pathways. AcsA undergoes a two-step reaction. In the first half reaction, AcsA combines acetate with ATP to form acetyl-adenylate (AcAMP) intermediate. In the second half reaction, it can then transfer the acetyl group from AcAMP to the sulfhydryl group of CoA, forming the product AcCoA. In Deinococcus radiodurans (strain ATCC 13939 / DSM 20539 / JCM 16871 / CCUG 27074 / LMG 4051 / NBRC 15346 / NCIMB 9279 / VKM B-1422 / R1), this protein is Acetyl-coenzyme A synthetase.